A 432-amino-acid chain; its full sequence is Adenylosuccinate synthetase (432 aa).

GTP is bound by residues 13–19 (GDEGKGK) and 41–43 (GHT). The active-site Proton acceptor is the Asp-14. Residues Asp-14 and Gly-41 each coordinate Mg(2+). IMP-binding positions include 14–17 (DEGK), 39–42 (NAGH), Thr-130, Arg-144, Gln-225, Thr-240, and Arg-306. The active-site Proton donor is His-42. 302–308 (TVTGRAR) serves as a coordination point for substrate. GTP-binding positions include Arg-308, 334–336 (KLD), and 416–418 (STG).

Belongs to the adenylosuccinate synthetase family. As to quaternary structure, homodimer. The cofactor is Mg(2+).

It localises to the cytoplasm. The enzyme catalyses IMP + L-aspartate + GTP = N(6)-(1,2-dicarboxyethyl)-AMP + GDP + phosphate + 2 H(+). It participates in purine metabolism; AMP biosynthesis via de novo pathway; AMP from IMP: step 1/2. Functionally, plays an important role in the de novo pathway of purine nucleotide biosynthesis. Catalyzes the first committed step in the biosynthesis of AMP from IMP. The sequence is that of Adenylosuccinate synthetase from Herminiimonas arsenicoxydans.